Consider the following 601-residue polypeptide: NADH-ubiquinone oxidoreductase chain 5 (601 aa).

Helical transmembrane passes span Ile-5–Phe-25, Tyr-37–Asp-54, Tyr-83–Tyr-105, Thr-112–Leu-129, Leu-134–His-156, Ile-169–Phe-189, Trp-209–Trp-231, Thr-240–Ile-260, Met-271–Ala-291, Ile-300–Gln-320, Leu-323–Ala-343, Leu-363–Pro-383, Met-400–Ile-420, Pro-451–Leu-471, Phe-478–Leu-498, Phe-508–His-528, and Asn-581–Phe-601.

Belongs to the complex I subunit 5 family.

It localises to the mitochondrion inner membrane. It carries out the reaction a ubiquinone + NADH + 5 H(+)(in) = a ubiquinol + NAD(+) + 4 H(+)(out). In terms of biological role, core subunit of the mitochondrial membrane respiratory chain NADH dehydrogenase (Complex I) that is believed to belong to the minimal assembly required for catalysis. Complex I functions in the transfer of electrons from NADH to the respiratory chain. The immediate electron acceptor for the enzyme is believed to be ubiquinone. The sequence is that of NADH-ubiquinone oxidoreductase chain 5 (MT-ND5) from Myxine glutinosa (Atlantic hagfish).